A 210-amino-acid chain; its full sequence is Glutathione S-transferase P (210 aa).

One can recognise a GST N-terminal domain in the interval 2–81; that stretch reads PPYTVVYFPV…HLGRTLGLYG (80 aa). Tyrosine 4 carries the post-translational modification Phosphotyrosine; by EGFR. Residues tyrosine 8, arginine 14, tryptophan 39, lysine 45, and 52-53 contribute to the glutathione site; that span reads QL. The residue at position 62 (threonine 62) is a Phosphothreonine. 65-66 contributes to the glutathione binding site; that stretch reads QS. Residues 83 to 204 enclose the GST C-terminal domain; the sequence is DQREAALVDM…ASPEHVNLPI (122 aa). An N6-succinyllysine mark is found at lysine 103 and lysine 116. N6-acetyllysine is present on lysine 128.

It belongs to the GST superfamily. Pi family. In terms of assembly, homodimer. Interacts with CDK5.

The protein localises to the cytoplasm. It is found in the mitochondrion. It localises to the nucleus. It catalyses the reaction RX + glutathione = an S-substituted glutathione + a halide anion + H(+). It carries out the reaction prostaglandin J2 + glutathione = prostaglandin J2-S-(R)-glutathione. The catalysed reaction is prostaglandin J2 + glutathione = prostaglandin J2-S-(S)-glutathione. The enzyme catalyses prostaglandin A2 + glutathione = prostaglandin A2-S-(S)-glutathione. It catalyses the reaction 11(S)-hydroxy-14(S),15(S)-epoxy-(5Z,8Z,12E)-eicosatrienoate + glutathione = (11S,15S)-dihydroxy-14(R)-S-glutathionyl-(5Z,8Z,12E)-eicosatrienoate. Functionally, conjugation of reduced glutathione to a wide number of exogenous and endogenous hydrophobic electrophiles. Involved in the formation of glutathione conjugates of both prostaglandin A2 (PGA2) and prostaglandin J2 (PGJ2). Participates in the formation of novel hepoxilin regioisomers. Negatively regulates CDK5 activity via p25/p35 translocation to prevent neurodegeneration. The chain is Glutathione S-transferase P (GSTP1) from Pongo abelii (Sumatran orangutan).